Reading from the N-terminus, the 142-residue chain is Trafficking protein particle complex subunit 1 (142 aa).

Belongs to the TRAPP small subunits family. BET5 subfamily. Part of the multisubunit TRAPP (transport protein particle) complex.

The protein resides in the golgi apparatus. It localises to the cis-Golgi network. Its subcellular location is the endoplasmic reticulum. Its function is as follows. May play a role in vesicular transport from endoplasmic reticulum to Golgi. The protein is Trafficking protein particle complex subunit 1 (trappc1-1) of Dictyostelium discoideum (Social amoeba).